The primary structure comprises 117 residues: UPF0344 protein GTNG_0604 (117 aa).

4 consecutive transmembrane segments (helical) span residues 1–21, 39–59, 61–81, and 97–117; these read MTHA…IAVS, LFYI…ASIS, LYWL…MVLV, and VIAL…FDLF.

It belongs to the UPF0344 family.

It localises to the cell membrane. This Geobacillus thermodenitrificans (strain NG80-2) protein is UPF0344 protein GTNG_0604.